Reading from the N-terminus, the 492-residue chain is Fibroblast growth factor receptor substrate 3 (492 aa).

A lipid anchor (N-myristoyl glycine) is attached at G2. In terms of domain architecture, IRS-type PTB spans 13–115 (VPHNHPTKFK…QCNSINVTEE (103 aa)). Disordered regions lie at residues 125–205 (PQEL…EDRR), 337–413 (QQLR…EPPR), and 425–492 (WGTA…DLPL). 2 stretches are compositionally biased toward polar residues: residues 133–147 (GSSQPTGYTVSSFSN) and 166–185 (PSTSSLRHPSPGEESTQTLI). Positions 374–385 (TSTRASARSHSS) are enriched in low complexity.

As to quaternary structure, binds NTRK1, FGFR1, NGFR, GRB2, PTPN11 and ERK2. In terms of processing, phosphorylated on tyrosine residues upon stimulation by BFGF or NGFB.

Its subcellular location is the membrane. Its function is as follows. Adapter protein that links FGF and NGF receptors to downstream signaling pathways. Involved in the activation of MAP kinases. Down-regulates ERK2 signaling by interfering with the phosphorylation and nuclear translocation of ERK2. The protein is Fibroblast growth factor receptor substrate 3 (Frs3) of Rattus norvegicus (Rat).